The primary structure comprises 376 residues: Formate dehydrogenase 1 (376 aa).

Residues Val97 and Asn121 each coordinate substrate. Residues 176–177 (RI), Asp197, 244–248 (PLHKD), Thr270, Asp296, and 325–328 (HISG) contribute to the NAD(+) site.

Belongs to the D-isomer specific 2-hydroxyacid dehydrogenase family. FDH subfamily. Homodimer.

Its subcellular location is the cytoplasm. The enzyme catalyses formate + NAD(+) = CO2 + NADH. In terms of biological role, catalyzes the NAD(+)-dependent oxidation of formate to carbon dioxide. Formate oxidation is the final step in the methanol oxidation pathway in methylotrophic microorganisms. Has a role in the detoxification of exogenous formate in non-methylotrophic organisms. The sequence is that of Formate dehydrogenase 1 (FDH1) from Saccharomyces cerevisiae (strain YJM789) (Baker's yeast).